We begin with the raw amino-acid sequence, 386 residues long: Flap endonuclease 1 (386 aa).

Positions 1-104 are N-domain; the sequence is MGILGLSKLI…GELAKRAERR (104 aa). A Mg(2+)-binding site is contributed by aspartate 34. Residues arginine 47 and arginine 70 each contribute to the DNA site. Mg(2+) is bound by residues aspartate 86, glutamate 158, glutamate 160, aspartate 179, and aspartate 181. Positions 122–253 are I-domain; that stretch reads EIEKFNRRLV…KRAIELINNY (132 aa). Glutamate 158 serves as a coordination point for DNA. 2 residues coordinate DNA: glycine 231 and aspartate 233. Aspartate 233 lines the Mg(2+) pocket. Residues 336–344 are interaction with PCNA; it reads TQVRLDSFF. The segment at 351–386 is disordered; it reads PNAVHAAKRKAEEAKKSANNKKAKTSGGAARGRRPK.

Belongs to the XPG/RAD2 endonuclease family. FEN1 subfamily. As to quaternary structure, interacts with PCNA. Three molecules of FEN1 bind to one PCNA trimer with each molecule binding to one PCNA monomer. PCNA stimulates the nuclease activity without altering cleavage specificity. Mg(2+) serves as cofactor. Phosphorylated. Phosphorylation upon DNA damage induces relocalization to the nuclear plasma.

The protein localises to the nucleus. It localises to the nucleolus. Its subcellular location is the nucleoplasm. It is found in the mitochondrion. Its function is as follows. Structure-specific nuclease with 5'-flap endonuclease and 5'-3' exonuclease activities involved in DNA replication and repair. During DNA replication, cleaves the 5'-overhanging flap structure that is generated by displacement synthesis when DNA polymerase encounters the 5'-end of a downstream Okazaki fragment. It enters the flap from the 5'-end and then tracks to cleave the flap base, leaving a nick for ligation. Also involved in the long patch base excision repair (LP-BER) pathway, by cleaving within the apurinic/apyrimidinic (AP) site-terminated flap. Acts as a genome stabilization factor that prevents flaps from equilibrating into structures that lead to duplications and deletions. Also possesses 5'-3' exonuclease activity on nicked or gapped double-stranded DNA, and exhibits RNase H activity. Also involved in replication and repair of rDNA and in repairing mitochondrial DNA. The polypeptide is Flap endonuclease 1 (Drosophila persimilis (Fruit fly)).